Here is a 678-residue protein sequence, read N- to C-terminus: Protein CASP (678 aa).

The Cytoplasmic portion of the chain corresponds to 1-619 (MAANVGSMFQ…LVLSNKMART (619 aa)). 2 coiled-coil regions span residues 67–450 (LLKS…QDLS) and 502–556 (LSII…FLQS). At S586 the chain carries Phosphoserine. Residues 620-640 (IGFFYTLFLHCLVFLVLYKLA) form a helical; Anchor for type IV membrane protein membrane-spanning segment. Topologically, residues 641–678 (WSESMERDCATFCAKKFADHLHKFHENDNGAAAGDLWQ) are lumenal.

This sequence belongs to the CASP family. In terms of assembly, homodimer; disulfide-linked. Interacts with GOLGA5.

The protein localises to the golgi apparatus membrane. Its function is as follows. May be involved in intra-Golgi retrograde transport. In Homo sapiens (Human), this protein is Protein CASP (CUX1).